The chain runs to 273 residues: 4-hydroxy-tetrahydrodipicolinate reductase (273 aa).

Residues 12 to 17 and Glu38 each bind NAD(+); that span reads GAGGRM. Residue Arg39 participates in NADP(+) binding. Residues 102 to 104 and 126 to 129 contribute to the NAD(+) site; these read GTT and AANF. His159 functions as the Proton donor/acceptor in the catalytic mechanism. Residue His160 coordinates (S)-2,3,4,5-tetrahydrodipicolinate. The Proton donor role is filled by Lys163. 169 to 170 contacts (S)-2,3,4,5-tetrahydrodipicolinate; that stretch reads GT.

It belongs to the DapB family. Homotetramer.

It is found in the cytoplasm. The enzyme catalyses (S)-2,3,4,5-tetrahydrodipicolinate + NAD(+) + H2O = (2S,4S)-4-hydroxy-2,3,4,5-tetrahydrodipicolinate + NADH + H(+). It catalyses the reaction (S)-2,3,4,5-tetrahydrodipicolinate + NADP(+) + H2O = (2S,4S)-4-hydroxy-2,3,4,5-tetrahydrodipicolinate + NADPH + H(+). It participates in amino-acid biosynthesis; L-lysine biosynthesis via DAP pathway; (S)-tetrahydrodipicolinate from L-aspartate: step 4/4. In terms of biological role, catalyzes the conversion of 4-hydroxy-tetrahydrodipicolinate (HTPA) to tetrahydrodipicolinate. The protein is 4-hydroxy-tetrahydrodipicolinate reductase of Klebsiella pneumoniae subsp. pneumoniae (strain ATCC 700721 / MGH 78578).